Here is a 599-residue protein sequence, read N- to C-terminus: mRNA export factor MEX67 (599 aa).

Serine 2 is subject to N-acetylserine. LRR repeat units lie at residues 163–184 (IVES…STLA) and 189–210 (NLKN…EVWK). An LRRCT domain is found at 224-262 (NPITTDKLYRTEMLRLFPKLVVLDNVIVRDEQKLQTVYS). The NTF2 domain maps to 280–467 (SSTDFATNFL…VIIASDLLTV (188 aa)). Residues 408–439 (KPELESNKKTGKNNYQKNRRYNHGYNSTSNNK) are disordered. The TAP-C domain maps to 546–599 (PVQLELLNKLHLETKLNAEYTFMLAEQSNWNYEVAIKGFQSSMNGIPREAFVQF).

Belongs to the NXF family. As to quaternary structure, interacts with nucleoporin complex NUP84 and MTR2. Interacts with MIP6.

It is found in the nucleus. The protein localises to the cytoplasm. In terms of biological role, involved in the export of mRNA from the nucleus to the cytoplasm. The chain is mRNA export factor MEX67 (MEX67) from Saccharomyces cerevisiae (strain ATCC 204508 / S288c) (Baker's yeast).